We begin with the raw amino-acid sequence, 206 residues long: Proteasome subunit beta type-2 (206 aa).

This sequence belongs to the peptidase T1B family. In terms of assembly, the 26S proteasome consists of a 20S proteasome core and two 19S regulatory subunits. The 20S proteasome core is composed of 28 subunits that are arranged in four stacked rings, resulting in a barrel-shaped structure. The two end rings are each formed by seven alpha subunits, and the two central rings are each formed by seven beta subunits. The catalytic chamber with the active sites is on the inside of the barrel.

It is found in the cytoplasm. Its subcellular location is the nucleus. Functionally, non-catalytic component of the proteasome, a multicatalytic proteinase complex which is characterized by its ability to cleave peptides with Arg, Phe, Tyr, Leu, and Glu adjacent to the leaving group at neutral or slightly basic pH. The proteasome has an ATP-dependent proteolytic activity. In Trypanosoma brucei brucei, this protein is Proteasome subunit beta type-2 (PSB4).